Consider the following 340-residue polypeptide: tRNA N6-adenosine threonylcarbamoyltransferase (340 aa).

Residues H111 and H115 each coordinate Fe cation. Substrate is bound by residues 133-137, D166, G179, D183, and N273; that span reads VVSGG. D301 contacts Fe cation.

The protein belongs to the KAE1 / TsaD family. It depends on Fe(2+) as a cofactor.

The protein localises to the cytoplasm. It catalyses the reaction L-threonylcarbamoyladenylate + adenosine(37) in tRNA = N(6)-L-threonylcarbamoyladenosine(37) in tRNA + AMP + H(+). Functionally, required for the formation of a threonylcarbamoyl group on adenosine at position 37 (t(6)A37) in tRNAs that read codons beginning with adenine. Is involved in the transfer of the threonylcarbamoyl moiety of threonylcarbamoyl-AMP (TC-AMP) to the N6 group of A37, together with TsaE and TsaB. TsaD likely plays a direct catalytic role in this reaction. The protein is tRNA N6-adenosine threonylcarbamoyltransferase of Pelobacter propionicus (strain DSM 2379 / NBRC 103807 / OttBd1).